The sequence spans 511 residues: MMKMRWLSAAVMLTLYTSSSWAFSIDDVAKQAQSLAGKGYEAPKSNLPSVFRDMKYADYQQIQFNHDKAYWNNLKTPFKLEFYHQGMYFDTPVKINEVTATAVKRIKYSPDYFTFGDVQHDKDTVKDLGFAGFKVLYPINSKDKNDEIVSMLGASYFRVIGAGQVYGLSARGLAIDTALPSGEEFPRFKEFWIERPKPTDKRLTIYALLDSPRATGAYKFVVMPGRDTVVDVQSKIYLRDKVGKLGVAPLTSMFLFGPNQPSPANNYRPELHDSNGLSIHAGNGEWIWRPLNNPKHLAVSSFSMENPRGFGLLQRGRDFSRFEDLDDRYDLRPSAWVTPKGEWGKGSVELVEIPTNDETNDNIVAYWTPDQLPEPGKEMNFKYTITFSRDEDKLHAPDNAWVQQTRRSTGDVKQSNLIRQPDGTIAFVVDFTGAEMKKLPEDTPVTAQTSIGDNGEIVESTVRYNPVTKGWRLVMRVKVKDAKKITEMRAALVNADQTLSETWSYQLPANE.

A signal peptide spans 1–22 (MMKMRWLSAAVMLTLYTSSSWA).

This sequence belongs to the OpgD/OpgG family.

The protein localises to the periplasm. It participates in glycan metabolism; osmoregulated periplasmic glucan (OPG) biosynthesis. Involved in the biosynthesis of osmoregulated periplasmic glucans (OPGs). The polypeptide is Glucans biosynthesis protein G (mdoG) (Shigella flexneri).